The sequence spans 501 residues: Maturase K (501 aa).

Belongs to the intron maturase 2 family. MatK subfamily.

It localises to the plastid. It is found in the chloroplast. Functionally, usually encoded in the trnK tRNA gene intron. Probably assists in splicing its own and other chloroplast group II introns. In Amborella trichopoda, this protein is Maturase K.